Consider the following 1230-residue polypeptide: Protein transport protein Sec31A (1230 aa).

WD repeat units lie at residues Lys4–Glu47, Ser64–Lys111, Lys120–Thr160, Gln166–Lys206, Asp209–Arg254, Asn258–Glu298, and Thr301–Arg342. The interval Pro161–Lys470 is interaction with SEC13. One copy of the WD 8; interaction with SEC13 repeat lies at Ser397 to Ser429. Asymmetric dimethylarginine is present on Arg423. A phosphoserine mark is found at Ser526 and Ser531. Lys646 participates in a covalent cross-link: Glycyl lysine isopeptide (Lys-Gly) (interchain with G-Cter in ubiquitin). Disordered stretches follow at residues Gln789–Ala905 and Met924–Asn1104. Ser798 is subject to Phosphoserine. Positions Ser799–Pro1123 are interaction with PDCD6. The ALG-2-binding site motif-2 (ABS-2) motif lies at Gly841–Asn847. Positions Gln866 to Tyr876 are enriched in pro residues. Composition is skewed to low complexity over residues Ala930–Ser940 and Pro959–Pro975. Polar residues-rich tracts occupy residues Pro981–Ala995 and Pro1033–Gln1064. Phosphothreonine is present on Thr1171. Ser1173 is modified (phosphoserine). A Glycyl lysine isopeptide (Lys-Gly) (interchain with G-Cter in ubiquitin) cross-link involves residue Lys1227.

The protein belongs to the WD repeat SEC31 family. As to quaternary structure, COPII is composed of at least 5 proteins: the SEC23/24 complex, the SEC13/31 complex and SAR1. SEC13 and SEC31 make a 2:2 tetramer that forms the edge element of the COPII outer coat. The tetramer self-assembles in multiple copies to form the complete polyhedral cage. Interacts (via WD 8) with SEC13. Interacts with PDCD6; interaction takes place in response to cytosolic calcium increase and leads to bridge together the BCR(KLHL12) complex and SEC31A, leading to monoubiquitination. Interacts with KLHL12. Monoubiquitinated by the BCR(KLHL12) E3 ubiquitin ligase complex, leading to regulate the size of COPII coats.

The protein resides in the cytoplasm. The protein localises to the cytoplasmic vesicle. Its subcellular location is the COPII-coated vesicle membrane. It localises to the endoplasmic reticulum membrane. Functionally, component of the coat protein complex II (COPII) which promotes the formation of transport vesicles from the endoplasmic reticulum (ER). The coat has two main functions, the physical deformation of the endoplasmic reticulum membrane into vesicles and the selection of cargo molecules. This chain is Protein transport protein Sec31A (Sec31a), found in Mus musculus (Mouse).